The sequence spans 235 residues: Large ribosomal subunit protein uL1 (235 aa).

The protein belongs to the universal ribosomal protein uL1 family. Part of the 50S ribosomal subunit.

Binds directly to 23S rRNA. The L1 stalk is quite mobile in the ribosome, and is involved in E site tRNA release. In terms of biological role, protein L1 is also a translational repressor protein, it controls the translation of the L11 operon by binding to its mRNA. This Citrobacter koseri (strain ATCC BAA-895 / CDC 4225-83 / SGSC4696) protein is Large ribosomal subunit protein uL1.